The chain runs to 223 residues: Urease accessory protein UreF (223 aa).

This sequence belongs to the UreF family. In terms of assembly, ureD, UreF and UreG form a complex that acts as a GTP-hydrolysis-dependent molecular chaperone, activating the urease apoprotein by helping to assemble the nickel containing metallocenter of UreC. The UreE protein probably delivers the nickel.

It is found in the cytoplasm. Its function is as follows. Required for maturation of urease via the functional incorporation of the urease nickel metallocenter. The sequence is that of Urease accessory protein UreF from Sinorhizobium medicae (strain WSM419) (Ensifer medicae).